A 307-amino-acid chain; its full sequence is D-alanine--D-alanine ligase (307 aa).

An ATP-grasp domain is found at 108–301 (KEVFAAAGLP…FPEFCAWMVE (194 aa)). 135–185 (LPPPYVVKPNCEGSSVGVYIVQADANGPPRLAPDMPRDLMVETYIPGRELT) serves as a coordination point for ATP. Residues Asp-252, Glu-268, and Asn-270 each contribute to the Mg(2+) site.

This sequence belongs to the D-alanine--D-alanine ligase family. The cofactor is Mg(2+). Requires Mn(2+) as cofactor.

The protein localises to the cytoplasm. It carries out the reaction 2 D-alanine + ATP = D-alanyl-D-alanine + ADP + phosphate + H(+). It participates in cell wall biogenesis; peptidoglycan biosynthesis. Cell wall formation. The sequence is that of D-alanine--D-alanine ligase from Cereibacter sphaeroides (strain ATCC 17025 / ATH 2.4.3) (Rhodobacter sphaeroides).